We begin with the raw amino-acid sequence, 535 residues long: Dimethylaniline monooxygenase [N-oxide-forming] 2 (535 aa).

Position 2 is an N-acetylalanine (alanine 2). Residues 9–13 (GAGVS), glutamate 32, 40–41 (LW), and 61–62 (NT) each bind FAD. NADP(+) is bound by residues 60-61 (TN) and 195-198 (SASD). Residue lysine 492 forms a Glycyl lysine isopeptide (Lys-Gly) (interchain with G-Cter in SUMO) linkage. Residues 510–530 (LSASFLMKILALVAVFVAFFS) form a helical membrane-spanning segment.

This sequence belongs to the FMO family. Requires FAD as cofactor. Mg(2+) is required as a cofactor. As to expression, lung.

It is found in the microsome membrane. Its subcellular location is the endoplasmic reticulum membrane. Catalyzes the oxidative metabolism of numerous xenobiotics, including mainly therapeutic drugs and insecticides that contain a soft nucleophile, most commonly nitrogen and sulfur and participates to their bioactivation. The polypeptide is Dimethylaniline monooxygenase [N-oxide-forming] 2 (Cavia porcellus (Guinea pig)).